Reading from the N-terminus, the 209-residue chain is Uracil phosphoribosyltransferase (209 aa).

5-phospho-alpha-D-ribose 1-diphosphate-binding positions include Arg-79, Arg-104, and 131–139 (DPMLATGGS). Residues Ile-194 and 199 to 201 (GDA) each bind uracil. Position 200 (Asp-200) interacts with 5-phospho-alpha-D-ribose 1-diphosphate.

It belongs to the UPRTase family. Mg(2+) is required as a cofactor.

The catalysed reaction is UMP + diphosphate = 5-phospho-alpha-D-ribose 1-diphosphate + uracil. It participates in pyrimidine metabolism; UMP biosynthesis via salvage pathway; UMP from uracil: step 1/1. With respect to regulation, allosterically activated by GTP. In terms of biological role, catalyzes the conversion of uracil and 5-phospho-alpha-D-ribose 1-diphosphate (PRPP) to UMP and diphosphate. This Clostridium acetobutylicum (strain ATCC 824 / DSM 792 / JCM 1419 / IAM 19013 / LMG 5710 / NBRC 13948 / NRRL B-527 / VKM B-1787 / 2291 / W) protein is Uracil phosphoribosyltransferase.